Consider the following 508-residue polypeptide: Abl interactor 1 (508 aa).

Ala-2 is subject to N-acetylalanine. Residues Ala-18 to Gln-79 form a required for binding to WASF1 region. In terms of domain architecture, t-SNARE coiled-coil homology spans Lys-45–Arg-107. Tyr-53 is subject to Phosphotyrosine. 3 disordered regions span residues Lys-159–Leu-290, Ala-306–Gln-375, and Asn-388–Tyr-421. Over residues Gly-161–Asn-175 the composition is skewed to polar residues. 2 positions are modified to phosphothreonine: Thr-174 and Thr-178. Residues Ser-183 and Ser-187 each carry the phosphoserine modification. Position 213 is a phosphotyrosine; by ABL1 (Tyr-213). Thr-215 carries the phosphothreonine modification. Phosphoserine is present on residues Ser-216, Ser-222, and Ser-225. The segment covering Ser-222–Arg-235 has biased composition (polar residues). Over residues Ser-248 to Gly-258 the composition is skewed to low complexity. Pro residues predominate over residues Val-278 to Leu-290. Residues Pro-307–Asn-322 are compositionally biased toward polar residues. Residues Ser-319 and Ser-323 each carry the phosphoserine modification. Positions Pro-337–Pro-347 are enriched in polar residues. Pro residues-rich tracts occupy residues Pro-393 to Asp-403 and Ser-410 to Val-419. An SH3 domain is found at Asn-446–His-505. At Tyr-455 the chain carries Phosphotyrosine. Ser-466 is subject to Phosphoserine. Thr-507 carries the phosphothreonine modification.

The protein belongs to the ABI family. As to quaternary structure, interacts with ABL1, ENAH, STX1A, SNAP25, VAMP2, EPS8, and through its N-terminus with WASF1. Part of a complex consisting of ABI1, STX1A and SNAP25. Part of a complex consisting of ABI1, EPS8 and SOS1. Interacts with SOS1, SOS2, GRB2, SPTA1 and the first SH3 domain of NCK1. Isoform 6 does not interact with NCK1. Component of the WAVE2 complex composed of ABI1, CYFIP1/SRA1, NCKAP1/NAP1 (NCKAP1l/HEM1 in hematopoietic cells) and WASF2/WAVE2. Interacts (via SH3 domain) with SHANK2 and SHANK3, but not SHANK1; the interaction is direct. Interacts with the heterodimer MYC:MAX; the interaction may enhance MYC:MAX transcriptional activity. Interacts with FNBP1L (via the SH3 domain), WASF2, and CDC42, but only in the presence of FNBP1L. (Microbial infection) Interacts with human cytomegalovirus/HHV-5 protein UL135. In terms of processing, phosphorylated on tyrosine residues after serum stimulation or induction by v-Abl. Seems to be phosphorylated at Tyr-53 by ABL1, required for nuclear but not for synaptic localization. As to expression, widely expressed, with highest expression in brain.

The protein localises to the cytoplasm. The protein resides in the nucleus. It is found in the cell projection. Its subcellular location is the lamellipodium. It localises to the filopodium. The protein localises to the growth cone. The protein resides in the postsynaptic density. It is found in the cytoskeleton. In terms of biological role, may act in negative regulation of cell growth and transformation by interacting with nonreceptor tyrosine kinases ABL1 and/or ABL2. May play a role in regulation of EGF-induced Erk pathway activation. Involved in cytoskeletal reorganization and EGFR signaling. Together with EPS8 participates in transduction of signals from Ras to Rac. In vitro, a trimeric complex of ABI1, EPS8 and SOS1 exhibits Rac specific guanine nucleotide exchange factor (GEF) activity and ABI1 seems to act as an adapter in the complex. Regulates ABL1/c-Abl-mediated phosphorylation of ENAH. Recruits WASF1 to lamellipodia and there seems to regulate WASF1 protein level. In brain, seems to regulate the dendritic outgrowth and branching as well as to determine the shape and number of synaptic contacts of developing neurons. This chain is Abl interactor 1, found in Homo sapiens (Human).